The sequence spans 384 residues: Homoserine O-succinyltransferase (384 aa).

The region spanning 51–361 (NAILICHALS…ETSQGHDAFL (311 aa)) is the AB hydrolase-1 domain. Serine 157 (nucleophile) is an active-site residue. Arginine 227 contributes to the substrate binding site. Active-site residues include aspartate 324 and histidine 357. Substrate is bound at residue aspartate 358.

It belongs to the AB hydrolase superfamily. MetX family. As to quaternary structure, homodimer.

Its subcellular location is the cytoplasm. The catalysed reaction is L-homoserine + succinyl-CoA = O-succinyl-L-homoserine + CoA. It functions in the pathway amino-acid biosynthesis; L-methionine biosynthesis via de novo pathway; O-succinyl-L-homoserine from L-homoserine: step 1/1. Functionally, transfers a succinyl group from succinyl-CoA to L-homoserine, forming succinyl-L-homoserine. This chain is Homoserine O-succinyltransferase, found in Alkalilimnicola ehrlichii (strain ATCC BAA-1101 / DSM 17681 / MLHE-1).